The primary structure comprises 398 residues: Acetate kinase (398 aa).

Residue Asn-8 coordinates Mg(2+). Lys-15 provides a ligand contact to ATP. Arg-89 is a substrate binding site. The Proton donor/acceptor role is filled by Asp-146. Residues 206–210, 281–283, and 329–333 contribute to the ATP site; these read HIGNG, DLR, and GVGEN. Glu-383 provides a ligand contact to Mg(2+).

The protein belongs to the acetokinase family. In terms of assembly, homodimer. The cofactor is Mg(2+). Requires Mn(2+) as cofactor.

The protein localises to the cytoplasm. The catalysed reaction is acetate + ATP = acetyl phosphate + ADP. The protein operates within metabolic intermediate biosynthesis; acetyl-CoA biosynthesis; acetyl-CoA from acetate: step 1/2. Catalyzes the formation of acetyl phosphate from acetate and ATP. Can also catalyze the reverse reaction. In Macrococcus caseolyticus (strain JCSC5402) (Macrococcoides caseolyticum), this protein is Acetate kinase.